Here is a 407-residue protein sequence, read N- to C-terminus: (R)-phenyllactyl-CoA dehydratase alpha subunit (407 aa).

Residues 1–4 constitute a propeptide that is removed on maturation; that stretch reads MSDR.

Belongs to the FldB/FldC dehydratase alpha/beta subunit family. In terms of assembly, part of the heterotrimeric phenyllactate dehydratase complex FldABC, composed of (R)-phenyllactate CoA-transferase (FldA) and a heterodimeric (R)-phenyllactyl-CoA dehydratase (FldB and FldC). The cofactor is [4Fe-4S] cluster. No flavin could be detected in the FldABC complex, and the addition of FAD, FMN or riboflavin to the dehydratase do not increase enzymatic activity. serves as cofactor.

It catalyses the reaction (R)-3-phenyllactoyl-CoA = (E)-cinnamoyl-CoA + H2O. The enzyme catalyses (R)-3-(4-hydroxyphenyl)lactoyl-CoA = (E)-4-coumaroyl-CoA + H2O. It carries out the reaction (R)-3-(indol-3-yl)lactoyl-CoA = (E)-3-(indol-3-yl)acryloyl-CoA + H2O. It functions in the pathway amino-acid degradation; L-phenylalanine degradation. Component of the phenyllactate dehydratase complex FldABC that is involved in the fermentation of L-phenylalanine via a Stickland reaction. This complex catalyzes the reversible syn-dehydration of (R)-phenyllactate to (E)-cinnamate in two steps, a CoA-transfer from cinnamoyl-CoA to phenyllactate, catalyzed by FldA, followed by the dehydration of phenyllactyl-CoA to cinnamoyl-CoA, catalyzed by FldB and FldC. Requires the activator FldI to initiate catalysis. The chain is (R)-phenyllactyl-CoA dehydratase alpha subunit from Clostridium sporogenes.